We begin with the raw amino-acid sequence, 172 residues long: Putative phosphoesterase BcerKBAB4_1135 (172 aa).

His-34 (proton donor) is an active-site residue. 2 consecutive short sequence motifs (HXTX) follow at residues 34-37 (HITL) and 115-118 (HLTI). The active-site Proton acceptor is the His-115.

It belongs to the 2H phosphoesterase superfamily. YjcG family.

This chain is Putative phosphoesterase BcerKBAB4_1135, found in Bacillus mycoides (strain KBAB4) (Bacillus weihenstephanensis).